We begin with the raw amino-acid sequence, 453 residues long: Transmembrane protease serine 3 (453 aa).

At 1-48 (MGENDPPAAEAPFSFRSLFGLDDLKISPVAPDGDAVAAQILSLLPLKF) the chain is on the cytoplasmic side. A helical; Signal-anchor for type II membrane protein membrane pass occupies residues 49 to 69 (FPIIVIGIIALILALAIGLGI). Residues 70-453 (HFDCSGKYRC…HEQLERDLKT (384 aa)) lie on the Extracellular side of the membrane. The LDL-receptor class A domain occupies 72-108 (DCSGKYRCHSSFKCIELTARCDGVSDCKNAEDEYRCV). Intrachain disulfides connect cysteine 73-cysteine 85, cysteine 79-cysteine 98, cysteine 92-cysteine 107, cysteine 129-cysteine 194, cysteine 142-cysteine 204, cysteine 207-cysteine 324, cysteine 242-cysteine 258, cysteine 338-cysteine 406, cysteine 369-cysteine 385, and cysteine 396-cysteine 424. One can recognise an SRCR domain in the interval 104–205 (EYRCVRVSGQ…SGHVVTLKCS (102 aa)). One can recognise a Peptidase S1 domain in the interval 217–448 (IVGGNMSSLT…FLDWIHEQLE (232 aa)). N-linked (GlcNAc...) asparagine glycosylation occurs at asparagine 221. Active-site charge relay system residues include histidine 257 and aspartate 304. Serine 400 functions as the Charge relay system in the catalytic mechanism.

It belongs to the peptidase S1 family. Undergoes autoproteolytic activation. Strongly expressed in liver, cochlea, brain, cerebellum, spleen, lung, and muscle and at a lower degree in retina, kidney, and heart. Expressed in the spiral ganglion, the cells supporting the organ of Corti and the stria vascularis. Isoform 2 is strongly expressed only in the cochlea with very faint expression in the cerebellum, spleen and muscle.

The protein resides in the endoplasmic reticulum membrane. Functionally, probable serine protease that plays a role in hearing. Acts as a permissive factor for cochlear hair cell survival and activation at the onset of hearing and is required for saccular hair cell survival. Activates ENaC (in vitro). In Mus musculus (Mouse), this protein is Transmembrane protease serine 3 (Tmprss3).